The primary structure comprises 435 residues: Histidinol dehydrogenase (435 aa).

NAD(+) contacts are provided by Y131, Q189, and N212. S238, Q260, and H263 together coordinate substrate. Residues Q260 and H263 each contribute to the Zn(2+) site. Residues E327 and H328 each act as proton acceptor in the active site. The substrate site is built by H328, D361, E415, and H420. D361 contributes to the Zn(2+) binding site. Zn(2+) is bound at residue H420.

It belongs to the histidinol dehydrogenase family. Homodimer. Requires Zn(2+) as cofactor.

It catalyses the reaction L-histidinol + 2 NAD(+) + H2O = L-histidine + 2 NADH + 3 H(+). The protein operates within amino-acid biosynthesis; L-histidine biosynthesis; L-histidine from 5-phospho-alpha-D-ribose 1-diphosphate: step 9/9. Its function is as follows. Catalyzes the sequential NAD-dependent oxidations of L-histidinol to L-histidinaldehyde and then to L-histidine. In Buchnera aphidicola subsp. Schizaphis graminum (strain Sg), this protein is Histidinol dehydrogenase (hisD).